Consider the following 378-residue polypeptide: AA13 family lytic polysaccharide monooxygenase A (378 aa).

The first 17 residues, 1-17 (MKWSVIQALALASGVQA), serve as a signal peptide directing secretion. Residue histidine 18 coordinates Cu(2+). Histidine 18 carries the post-translational modification Methylhistidine. A Chitin-binding type-4 domain is found at 18-244 (HGYLTFPMSR…PQIYLTCADI (227 aa)). 7 disulfide bridges follow: cysteine 39/cysteine 42, cysteine 65/cysteine 241, cysteine 101/cysteine 199, cysteine 117/cysteine 144, cysteine 152/cysteine 160, cysteine 166/cysteine 172, and cysteine 180/cysteine 188. Histidine 108 is a Cu(2+) binding site. Asparagine 221 carries an N-linked (GlcNAc...) asparagine glycan. Cu(2+) is bound at residue tyrosine 238. Low complexity predominate over residues 250–263 (DSQSPPTTTTTSTP). The interval 250-272 (DSQSPPTTTTTSTPASPPPTSCA) is disordered. One can recognise a CBM20 domain in the interval 272 to 378 (ATPAASVAVT…GTATVDTAWK (107 aa)).

The protein belongs to the polysaccharide monooxygenase AA13 family. Cu(2+) serves as cofactor. O-mannosylated.

Its subcellular location is the secreted. The catalysed reaction is starch + reduced acceptor + O2 = D-glucono-1,5-lactone-terminated malto-oligosaccharides + short-chain malto-oligosaccharides + acceptor + H2O.. Activity is inhibited by both beta-cyclodextrin or amylose that block the access to the active site. Functionally, starch-active lytic polysaccharide monooxygenase that oxidizes the C1 position of starch substrates. Catalysis by LPMOs requires the reduction of the active-site copper from Cu(II) to Cu(I) by a reducing agent and H(2)O(2) or O(2) as a cosubstrate. The sequence is that of AA13 family lytic polysaccharide monooxygenase A from Pyricularia oryzae (strain 70-15 / ATCC MYA-4617 / FGSC 8958) (Rice blast fungus).